The chain runs to 144 residues: Large ribosomal subunit protein uL15 (144 aa).

Positions 1 to 52 (MIKLESLQDPSPRKRRKKLLGRGPGSGHGKTSGRGHKGDGSRSGYKRRFGYE) are disordered. Residues 22-32 (RGPGSGHGKTS) show a composition bias toward gly residues.

This sequence belongs to the universal ribosomal protein uL15 family. As to quaternary structure, part of the 50S ribosomal subunit.

Binds to the 23S rRNA. The protein is Large ribosomal subunit protein uL15 of Chlamydia felis (strain Fe/C-56) (Chlamydophila felis).